The primary structure comprises 222 residues: ER membrane protein complex subunit 7 homolog (222 aa).

The first 16 residues, 1 to 16, serve as a signal peptide directing secretion; sequence MKSILLLFSLIVLGSA. Residues 17–145 lie on the Extracellular side of the membrane; sequence TEEVSRTEQT…RKREEWRITD (129 aa). A helical transmembrane segment spans residues 146–166; sequence MLFSPMVLMLVVPLVVMLILP. At 167 to 222 the chain is on the cytoplasmic side; that stretch reads KMTANDPELKKEMENMQMPKVDMPDVGEMMANFFGGSAPAKKKAVTGGSGSGQRRK.

It belongs to the EMC7 family.

The protein resides in the membrane. In Caenorhabditis elegans, this protein is ER membrane protein complex subunit 7 homolog.